The sequence spans 219 residues: Baseplate wedge protein gp11 (219 aa).

In terms of assembly, homotrimer. The gp11 trimer interacts with gp10 trimer and with the short tail fiber (STF) composed of the gp12 trimer. Part of the baseplate macromolecular complex which consists of gp5, gp5.4, gp27 (central spike complex); gp6, gp25, gp53 (inner baseplate); gp7, gp8 (intermediate baseplate); gp9, gp10, gp11, gp12 (peripheral); gp48 and gp54 (proximal region of the tail tube).

It localises to the virion. Its function is as follows. Baseplate protein that is part of the baseplate wedge and that connects the short tail fibers to the baseplate. Involved in the tail assembly. The chain is Baseplate wedge protein gp11 (11) from Enterobacteria phage T4 (Bacteriophage T4).